Here is a 538-residue protein sequence, read N- to C-terminus: Calcium-dependent protein kinase 3 (538 aa).

The segment at 23–70 (PKKSIERIKKKKDSNKSIKSQHKFEGSKISNKNNELKDVKSKDPKNYE) is disordered. Basic and acidic residues predominate over residues 56 to 68 (NELKDVKSKDPKN). The 256-residue stretch at 112–367 (NLSEEPLGKG…ASEALKHPWF (256 aa)) folds into the Protein kinase domain. ATP-binding positions include 118 to 126 (LGKGTYGCV) and lysine 141. The Proton acceptor role is filled by aspartate 232. Residues 387-395 (NFKNYALLL) carry the J domain autoinhibitory motif motif. The j domain stretch occupies residues 387–422 (NFKNYALLLKLQKLAMTIIAQQSNDYDLQQLKAVFL). The J domain EF-hand interaction motif signature appears at 396 to 405 (KLQKLAMTII). 3 EF-hand domains span residues 412–447 (YDLQ…SGLK), 450–481 (QNFD…DRKH), and 482–517 (LSKK…VILF). Ca(2+)-binding residues include aspartate 460, aspartate 462, serine 464, arginine 466, glutamate 471, aspartate 495, aspartate 497, aspartate 499, glutamate 501, and glutamate 506.

It belongs to the protein kinase superfamily. Ser/Thr protein kinase family. CDPK subfamily. Mg(2+) is required as a cofactor.

It is found in the cytoplasm. The enzyme catalyses L-seryl-[protein] + ATP = O-phospho-L-seryl-[protein] + ADP + H(+). It catalyses the reaction L-threonyl-[protein] + ATP = O-phospho-L-threonyl-[protein] + ADP + H(+). Activated by calcium. Upon calcium binding to the EF-hand domain 2, the C-terminus of the junction domain (J domain) undergoes a conformational change which results in the dissociation of the pseudo-substrate inhibitory motif from the catalytic domain. This, in turn, may facilitate the autophosphorylation of the activation loop at Thr-273, which leads to the kinase activation. Functionally, calcium-dependent protein kinase which acts as a sensor and effector of intracellular Ca(2+) levels probably in part downstream of cGMP-activated PKG kinase. In the mosquito midgut, regulates the gliding motility of the ookinete which is essential for the ookinete to invade the midgut epithelium. However, another study showed that while required for ookinete invasion of the midgut epithelium, is not required for ookinete gliding motility. This Plasmodium yoelii yoelii protein is Calcium-dependent protein kinase 3.